The chain runs to 47 residues: Large ribosomal subunit protein bL34 (47 aa).

This sequence belongs to the bacterial ribosomal protein bL34 family.

The chain is Large ribosomal subunit protein bL34 from Mycobacteroides abscessus (strain ATCC 19977 / DSM 44196 / CCUG 20993 / CIP 104536 / JCM 13569 / NCTC 13031 / TMC 1543 / L948) (Mycobacterium abscessus).